A 529-amino-acid polypeptide reads, in one-letter code: Pre-rRNA-processing protein pro-1 (529 aa).

WD repeat units follow at residues 136–175 (AHYQ…SADR) and 287–326 (GHSD…CLKV). Residues 416–518 (ARNEAAKAEK…LKEINKQMYE (103 aa)) are a coiled coil. A disordered region spans residues 436–470 (TLGDDEDDAPEVGNQRRKSGKKNKKNRKNQKKNDF). The segment covering 450–465 (QRRKSGKKNKKNRKNQ) has biased composition (basic residues).

Belongs to the WD repeat IPI3/WDR18 family. Component of the PELP1 complex, composed of at least PELP1, TEX10 and WDR18. The complex interacts with pre-60S ribosome particles.

Its subcellular location is the nucleus. The protein resides in the nucleolus. The protein localises to the nucleoplasm. Its function is as follows. Component of the PELP1 complex involved in the nucleolar steps of 28S rRNA maturation and the subsequent nucleoplasmic transit of the pre-60S ribosomal subunit. Required for processing ITS2 sequences from rRNA intermediates during 26S rRNA maturation. Required in the soma to promote normal proliferation and prevent germline tumor formation. The chain is Pre-rRNA-processing protein pro-1 from Caenorhabditis elegans.